Consider the following 231-residue polypeptide: Urease accessory protein UreE (231 aa).

Positions 185–231 are disordered; it reads VASPLDEPHGSGLHIHGIHSHEEGHSHGDHDHDHSHSHGDHDHDHKH. The span at 203 to 231 shows a compositional bias: basic and acidic residues; that stretch reads HSHEEGHSHGDHDHDHSHSHGDHDHDHKH.

The protein belongs to the UreE family.

The protein localises to the cytoplasm. Functionally, involved in urease metallocenter assembly. Binds nickel. Probably functions as a nickel donor during metallocenter assembly. The chain is Urease accessory protein UreE from Yersinia pestis bv. Antiqua (strain Antiqua).